Here is a 617-residue protein sequence, read N- to C-terminus: Chitin elicitor receptor kinase 1 (617 aa).

The first 23 residues, 1-23, serve as a signal peptide directing secretion; that stretch reads MKLKISLIAPILLLFSFFFAVES. Topologically, residues 24–232 are extracellular; the sequence is KCRTSCPLAL…KSSKQDGVGA (209 aa). 3 disulfide bridges follow: Cys-25–Cys-93, Cys-29–Cys-155, and Cys-91–Cys-153. Residues Asn-40, Asn-52, and Asn-102 are each glycosylated (N-linked (GlcNAc...) asparagine). The 29-residue stretch at 46–74 folds into the LysM 1; degenerate domain; the sequence is VINQNLNSSIAPYDQINFDPILRYNSNIK. One can recognise a LysM 2; degenerate domain in the interval 108–140; the sequence is RQEDTYERVAISNYANLTTMESLQARNPFPATN. Position 109–115 (109–115) interacts with chitin; sequence QEDTYER. A glycan (N-linked (GlcNAc...) asparagine) is linked at Asn-123. 137–143 contributes to the chitin binding site; that stretch reads PATNIPL. N-linked (GlcNAc...) asparagine glycosylation is present at Asn-152. One can recognise a LysM 3 domain in the interval 168–211; it reads VTYPLRPEDSLSSIARSSGVSADILQRYNPGVNFNSGNGIVYVP. A helical membrane pass occupies residues 233–253; sequence GVIAGIVIGVIVALLLILFIV. Topologically, residues 254–617 are cytoplasmic; the sequence is YYAYRKNKSK…EDLVSLMSGR (364 aa). Phosphoserine is present on residues Ser-266, Ser-268, and Ser-274. In terms of domain architecture, Protein kinase spans 322–594; that stretch reads FNLSFKIGQG…YIVVALSTLF (273 aa). ATP is bound by residues 328 to 336 and Lys-349; that span reads IGQGGFGAV. Tyr-390 bears the Phosphotyrosine mark. Asp-441 functions as the Proton acceptor in the catalytic mechanism. Phosphothreonine is present on residues Thr-479 and Thr-519.

Belongs to the protein kinase superfamily. Ser/Thr protein kinase family. As to quaternary structure, forms homodimers and homooligomers. Homodimerization is required to trigger plant defenses. Binds to chitin, chitosan and chito-oligomer oligosaccharide elicitors. Interaction with chitin octamer (NAG(8)) promotes homodimerization while shorter chitin oligomers inhibit homodimerization. Interacts with Pseudomonas syringae hopAB2/avrPtoB. Interacts (preferentially when unphosphorylated) with PBL27 at the plasma membrane. Binds to IOS1. Post-translationally, autophosphorylated. Autophosphorylation is induced by chitin and derivatives. In terms of processing, ubiquitinated and targeted to the proteasome by hopAB2/avrPtoB of Pseudomonas syringae pv. tomato DC3000. Expressed ubiquitously, with lowest expression in pollen.

It localises to the cell membrane. It carries out the reaction L-seryl-[protein] + ATP = O-phospho-L-seryl-[protein] + ADP + H(+). The catalysed reaction is L-threonyl-[protein] + ATP = O-phospho-L-threonyl-[protein] + ADP + H(+). Activated by chitin-mediated homodimerization. Lysin motif (LysM) receptor kinase that functions as a cell surface receptor in chitin elicitor (chitooligosaccharides) signaling leading to innate immunity toward both biotic and abiotic stresses (e.g. tolerance to salinity, heavy-metal stresses, and Botrytis cinerea infection). Recognizes microbe-derived N-acetylglucosamine (NAG)-containing ligands. Involved in the resistance to pathogenic fungi Alternaria brassicicola and Erysiphe cichoracearum, probably by sensing microbe-associated molecular patterns (MAMP) and pathogen-associated molecular patterns (PAMP). Plays an essential role in detecting peptidoglycans (e.g. PGNs) and restricting bacterial growth. Target of the bacterial type III effector E3-ligase protein hopAB2/avrPtoB of Pseudomonas syringae pv. tomato DC3000 that mediates ubiquitination and subsequent proteolysis, thus blocking all defense responses by suppressing PAMP-triggered immunity (PTI). Mediates chitin-induced phosphorylation of PBL27. The sequence is that of Chitin elicitor receptor kinase 1 (CERK1) from Arabidopsis thaliana (Mouse-ear cress).